Reading from the N-terminus, the 362-residue chain is Dihydroorotate dehydrogenase (quinone) (362 aa).

FMN-binding positions include 60–64 and threonine 84; that span reads AGFDK. Residue lysine 64 coordinates substrate. 109–113 contacts substrate; it reads NRMGF. Asparagine 137 and asparagine 168 together coordinate FMN. Asparagine 168 serves as a coordination point for substrate. The Nucleophile role is filled by serine 171. Asparagine 173 contacts substrate. Residues lysine 213 and serine 241 each contribute to the FMN site. Residue 242-243 participates in substrate binding; sequence NT. FMN contacts are provided by residues glycine 264, glycine 293, and 314-315; that span reads YS.

It belongs to the dihydroorotate dehydrogenase family. Type 2 subfamily. In terms of assembly, monomer. The cofactor is FMN.

It localises to the cell membrane. It carries out the reaction (S)-dihydroorotate + a quinone = orotate + a quinol. It participates in pyrimidine metabolism; UMP biosynthesis via de novo pathway; orotate from (S)-dihydroorotate (quinone route): step 1/1. Functionally, catalyzes the conversion of dihydroorotate to orotate with quinone as electron acceptor. This chain is Dihydroorotate dehydrogenase (quinone), found in Bartonella henselae (strain ATCC 49882 / DSM 28221 / CCUG 30454 / Houston 1) (Rochalimaea henselae).